A 482-amino-acid polypeptide reads, in one-letter code: Chromosome stability protein 9 (482 aa).

Disordered stretches follow at residues S239–N263 and S418–R482. The segment covering S240 to N249 has biased composition (low complexity). Over residues G250–N263 the composition is skewed to polar residues. Residues S418–S437 show a composition bias toward low complexity. Composition is skewed to polar residues over residues L440–H453 and R463–K473.

As to quaternary structure, component of the synapsis initiation complex composed of at least ZIP2, ZIP3, MSH4 and MSH5. Also interacts with ZIP1, MRE11, RAD51 and RAD53.

It localises to the nucleus. It is found in the chromosome. Its function is as follows. Component of the synapsis initiation complex (SIC) necessary for the synaptonemal complex assembly. Stabilizes the ZIP2 component to the chromosomes. The SIC complex loads onto chromosomes and nucleates ZIP1 polymerization, a molecular zipper that acts to bring homologous chromosomes in close apposition, which is required for meiotic crossover. May also be involved in double strand break repair. This is Chromosome stability protein 9 (CST9) from Saccharomyces cerevisiae (strain ATCC 204508 / S288c) (Baker's yeast).